The sequence spans 370 residues: Isopentenyl-diphosphate delta-isomerase (370 aa).

8–9 (RK) contacts substrate. Residues Thr65, 66-68 (GMT), Ser99, and Asn127 each bind FMN. 99 to 101 (SQR) lines the substrate pocket. Substrate is bound at residue Gln166. Glu167 is a Mg(2+) binding site. FMN is bound by residues Lys198, Ser223, Thr228, 277 to 279 (GMR), and 298 to 299 (AL).

The protein belongs to the IPP isomerase type 2 family. Homooctamer. Dimer of tetramers. FMN serves as cofactor. The cofactor is NADPH. It depends on Mg(2+) as a cofactor.

It is found in the cytoplasm. The catalysed reaction is isopentenyl diphosphate = dimethylallyl diphosphate. In terms of biological role, involved in the biosynthesis of isoprenoids. Catalyzes the 1,3-allylic rearrangement of the homoallylic substrate isopentenyl (IPP) to its allylic isomer, dimethylallyl diphosphate (DMAPP). The chain is Isopentenyl-diphosphate delta-isomerase from Pyrococcus abyssi (strain GE5 / Orsay).